We begin with the raw amino-acid sequence, 485 residues long: MKPSLKRRLLLLSRKFAKASIRKLLRQSSFSSHEFLLQAPFPAMSWYRRTKLVFDSLRRNINPKILPRSHVTSRINNPIGSSNPSAKFSSISSREVGLRSWTSLGRNTNRIAYNPFLSQPKRYYYVDRYQVRHFKPRGPGRWFQNPRTVFTVVLVGSVGLITLIVGNTETIPYTKRTHFILLSKPMEKLLGETQFEQIKKTYQGKILPATHPESIRVRLIAKEVIDALQRGLSNERVWSDLGYASTESSLGGGSDKGVKEMEMAMSGEDTMTDMKWSKEDQVLDDQWIQKSRKKDSKAHAATSHLEGISWEVLVVNEPIVNAFCLPAGKIVVFTGLLNHFKSDAEVATVIGHEVGHAVARHVAEGITKNLWFAILQLVLYQFVMPDLVNTMSALFLRLPFSRKMEIEADYIGLLLLASAGYDPRVAPTVYEKLGKLGGDALGDYLSTHPSGKKRSKLLAQANVMEEALMIYREVQAGRTGVEGFL.

The transit peptide at 1 to 16 directs the protein to the mitochondrion; the sequence is MKPSLKRRLLLLSRKF. Over 17–147 the chain is Mitochondrial matrix; it reads AKASIRKLLR…GPGRWFQNPR (131 aa). A helical membrane pass occupies residues 148-168; the sequence is TVFTVVLVGSVGLITLIVGNT. Residues 169-485 are Mitochondrial intermembrane-facing; that stretch reads ETIPYTKRTH…AGRTGVEGFL (317 aa). Zn(2+) is bound at residue H352. Residue E353 is part of the active site. Zn(2+)-binding residues include H356 and E405. Residues 456–485 form a required for protease activation region; that stretch reads KLLAQANVMEEALMIYREVQAGRTGVEGFL.

Belongs to the peptidase M48A family. As to quaternary structure, homooligomer. Zn(2+) serves as cofactor.

Its subcellular location is the mitochondrion inner membrane. In terms of biological role, protease that is part of the quality control system in the inner membrane of mitochondria. Metalloendopeptidase that modulates the oxidative phosphorylation (OXPHOS) system and plant growth. Involved in tolerance mechanisms to heat, osmotic and oxidative stresses. This is Mitochondrial metalloendopeptidase OMA1 from Arabidopsis thaliana (Mouse-ear cress).